We begin with the raw amino-acid sequence, 444 residues long: Protein Z-dependent protease inhibitor (444 aa).

Residues 1 to 21 (MKVVPSLLLSVLLAQVWLVPG) form the signal peptide. Residues 24–65 (PSPQSPETPAPQNQTSRVVQAPKEEEEDEQEASEEKASEEEK) form a disordered region. N36 carries N-linked (GlcNAc...) asparagine glycosylation. S56 bears the Phosphoserine; by FAM20C mark. Over residues 56-65 (SEEKASEEEK) the composition is skewed to basic and acidic residues. Residues 136 to 153 (TKPGLLPSLFKGLRETLS) are heparin-binding. N180, N197, and N295 each carry an N-linked (GlcNAc...) asparagine glycan.

This sequence belongs to the serpin family. In terms of assembly, interacts with PROZ. Phosphorylated by FAM20C in the extracellular medium. As to expression, expressed by the liver and secreted in plasma.

The protein localises to the secreted. Its function is as follows. Inhibits activity of the coagulation protease factor Xa in the presence of PROZ, calcium and phospholipids. Also inhibits factor XIa in the absence of cofactors. This is Protein Z-dependent protease inhibitor (SERPINA10) from Homo sapiens (Human).